A 265-amino-acid chain; its full sequence is Serine protease 1 (265 aa).

The first 21 residues, 1-21 (MKLFVFLALAVAAATAVPAPA), serve as a signal peptide directing secretion. Positions 22-35 (QKLTPTPIKDIQGR) are excised as a propeptide. A Peptidase S1 domain is found at 36–262 (ITNGYPAYEG…YLDWIRDNTG (227 aa)). The cysteines at positions 63 and 79 are disulfide-linked. Active-site charge relay system residues include H78 and D123. Cystine bridges form between C189–C201 and C211–C239. The active-site Charge relay system is S215.

Belongs to the peptidase S1 family. As to expression, abundantly expressed in the larval gut.

Its function is as follows. Major function may be to aid in digestion. The protein is Serine protease 1 of Drosophila melanogaster (Fruit fly).